A 393-amino-acid chain; its full sequence is Acyl-homoserine-lactone synthase OpaM (393 aa).

It belongs to the LuxM / VanM family.

The catalysed reaction is a fatty acyl-[ACP] + S-adenosyl-L-methionine = an N-acyl-L-homoserine lactone + S-methyl-5'-thioadenosine + holo-[ACP] + H(+). This is Acyl-homoserine-lactone synthase OpaM (opaM) from Vibrio parahaemolyticus serotype O3:K6 (strain RIMD 2210633).